Reading from the N-terminus, the 427-residue chain is 3-phosphoshikimate 1-carboxyvinyltransferase (427 aa).

The 3-phosphoshikimate site is built by Lys-22, Ser-23, and Arg-27. Lys-22 contacts phosphoenolpyruvate. Residues Gly-94 and Arg-122 each contribute to the phosphoenolpyruvate site. Positions 165, 167, 313, and 340 each coordinate 3-phosphoshikimate. Gln-167 provides a ligand contact to phosphoenolpyruvate. The active-site Proton acceptor is the Asp-313. Phosphoenolpyruvate contacts are provided by Arg-344 and Arg-386.

It belongs to the EPSP synthase family. Monomer.

It localises to the cytoplasm. The catalysed reaction is 3-phosphoshikimate + phosphoenolpyruvate = 5-O-(1-carboxyvinyl)-3-phosphoshikimate + phosphate. The protein operates within metabolic intermediate biosynthesis; chorismate biosynthesis; chorismate from D-erythrose 4-phosphate and phosphoenolpyruvate: step 6/7. Catalyzes the transfer of the enolpyruvyl moiety of phosphoenolpyruvate (PEP) to the 5-hydroxyl of shikimate-3-phosphate (S3P) to produce enolpyruvyl shikimate-3-phosphate and inorganic phosphate. The chain is 3-phosphoshikimate 1-carboxyvinyltransferase from Koribacter versatilis (strain Ellin345).